The following is a 900-amino-acid chain: Isoleucine--tRNA ligase (900 aa).

The 'HIGH' region motif lies at 58–68 (PYANGDLHTGH). Glu550 contributes to the L-isoleucyl-5'-AMP binding site. The short motif at 591–595 (KMSKS) is the 'KMSKS' region element. Lys594 contributes to the ATP binding site. Residues Cys871, Cys874, Cys888, and Cys891 each contribute to the Zn(2+) site.

It belongs to the class-I aminoacyl-tRNA synthetase family. IleS type 1 subfamily. In terms of assembly, monomer. It depends on Zn(2+) as a cofactor.

Its subcellular location is the cytoplasm. The catalysed reaction is tRNA(Ile) + L-isoleucine + ATP = L-isoleucyl-tRNA(Ile) + AMP + diphosphate. Functionally, catalyzes the attachment of isoleucine to tRNA(Ile). As IleRS can inadvertently accommodate and process structurally similar amino acids such as valine, to avoid such errors it has two additional distinct tRNA(Ile)-dependent editing activities. One activity is designated as 'pretransfer' editing and involves the hydrolysis of activated Val-AMP. The other activity is designated 'posttransfer' editing and involves deacylation of mischarged Val-tRNA(Ile). The chain is Isoleucine--tRNA ligase from Malacoplasma penetrans (strain HF-2) (Mycoplasma penetrans).